The primary structure comprises 201 residues: Sorting nexin-10 (201 aa).

Positions 8–125 (EEFVSVWVRD…SLHLFLQSHL (118 aa)) are required for interaction with ATP6V1D. Positions 10–127 (FVSVWVRDPR…HLFLQSHLNS (118 aa)) constitute a PX domain. Residues arginine 53, lysine 79, and arginine 94 each contribute to the a 1,2-diacyl-sn-glycero-3-phospho-(1D-myo-inositol-3-phosphate) site. Positions 156–201 (FPEEDEEGKKENDIDYDSESSSSGLGHSSDDSSSHGCKVNTAPQES) are disordered.

The protein belongs to the sorting nexin family. In terms of assembly, interacts with ATP6V1D; may play a role in ciliogenesis.

It localises to the cytoplasm. Its subcellular location is the endosome membrane. It is found in the cytoskeleton. The protein resides in the microtubule organizing center. The protein localises to the centrosome. In terms of biological role, probable phosphoinositide-binding protein involved in protein sorting and membrane trafficking in endosomes. Plays a role in cilium biogenesis through regulation of the transport and the localization of proteins to the cilium. Required for the localization to the cilium of V-ATPase subunit ATP6V1D and ATP6V0D1, and RAB8A. Involved in osteoclast differentiation and therefore bone resorption. The chain is Sorting nexin-10 (SNX10) from Homo sapiens (Human).